The chain runs to 200 residues: Holliday junction branch migration complex subunit RuvA (200 aa).

Residues 1 to 64 (MIAHLTGLVG…EDAFLLYGFA (64 aa)) are domain I. The interval 65–143 (EAAERDWFRL…RMPAGPGVTI (79 aa)) is domain II. The tract at residues 144–147 (AAPP) is flexible linker. The tract at residues 148-200 (ASGGVEADALLALAGLGFRRAEAQPVVGRILARLDGKADLDVVIRESLRELAR) is domain III.

Belongs to the RuvA family. In terms of assembly, homotetramer. Forms an RuvA(8)-RuvB(12)-Holliday junction (HJ) complex. HJ DNA is sandwiched between 2 RuvA tetramers; dsDNA enters through RuvA and exits via RuvB. An RuvB hexamer assembles on each DNA strand where it exits the tetramer. Each RuvB hexamer is contacted by two RuvA subunits (via domain III) on 2 adjacent RuvB subunits; this complex drives branch migration. In the full resolvosome a probable DNA-RuvA(4)-RuvB(12)-RuvC(2) complex forms which resolves the HJ.

The protein localises to the cytoplasm. Functionally, the RuvA-RuvB-RuvC complex processes Holliday junction (HJ) DNA during genetic recombination and DNA repair, while the RuvA-RuvB complex plays an important role in the rescue of blocked DNA replication forks via replication fork reversal (RFR). RuvA specifically binds to HJ cruciform DNA, conferring on it an open structure. The RuvB hexamer acts as an ATP-dependent pump, pulling dsDNA into and through the RuvAB complex. HJ branch migration allows RuvC to scan DNA until it finds its consensus sequence, where it cleaves and resolves the cruciform DNA. The sequence is that of Holliday junction branch migration complex subunit RuvA from Gluconacetobacter diazotrophicus (strain ATCC 49037 / DSM 5601 / CCUG 37298 / CIP 103539 / LMG 7603 / PAl5).